The primary structure comprises 349 residues: Microfibril-associated glycoprotein 3 (349 aa).

Positions 1–21 (MKLHHCLSFLLVVTLVPAALS) are cleaved as a signal peptide. The Extracellular portion of the chain corresponds to 22–139 (LEDVAPLGAN…TLRVIFTSGD (118 aa)). 4 N-linked (GlcNAc...) asparagine glycosylation sites follow: Asn31, Asn36, Asn63, and Asn103. The region spanning 41-130 (PSFELSAGSY…SPARASYSVT (90 aa)) is the Ig-like C2-type domain. Cys68 and Cys117 are joined by a disulfide. The chain crosses the membrane as a helical span at residues 140 to 160 (MSVYYMVVCLIAFTITLILNV). Residues 161 to 349 (TRLCLMSTHL…EGSIHHRVSI (189 aa)) are Cytoplasmic-facing. The tract at residues 280–349 (NPELGRSNSP…EGSIHHRVSI (70 aa)) is disordered. Positions 311 to 331 (VHLQSETKSIGTDSQDSSHFS) are enriched in polar residues.

In terms of processing, glycosylated.

The protein resides in the cell membrane. Functionally, component of the elastin-associated microfibrils. In Mus musculus (Mouse), this protein is Microfibril-associated glycoprotein 3 (Mfap3).